Here is a 61-residue protein sequence, read N- to C-terminus: LECHNQQSSQPPTTKTCPGETNCYKKRWRDHRGSITERGCGCPSVKKGIEINCCTTDKCNN.

4 disulfide bridges follow: Cys3/Cys23, Cys17/Cys40, Cys42/Cys53, and Cys54/Cys59.

Belongs to the three-finger toxin family. Short-chain subfamily. Type I alpha-neurotoxin sub-subfamily. Expressed by the venom gland.

The protein localises to the secreted. Its function is as follows. Binds to muscle nicotinic acetylcholine receptor (nAChR) and inhibit acetylcholine from binding to the receptor, thereby impairing neuromuscular transmission. Produces peripheral paralysis by blocking neuromuscular transmission at the postsynaptic site. Binds to the muscular nicotinic acetylcholine receptor. The sequence is that of Short neurotoxin 1 from Naja annulifera (Banded Egyptian cobra).